The primary structure comprises 66 residues: Large ribosomal subunit protein uL29 (66 aa).

It belongs to the universal ribosomal protein uL29 family.

This chain is Large ribosomal subunit protein uL29, found in Rhizobium johnstonii (strain DSM 114642 / LMG 32736 / 3841) (Rhizobium leguminosarum bv. viciae).